The chain runs to 989 residues: Translation initiation factor IF-2 (989 aa).

Disordered regions lie at residues 28 to 60 and 97 to 397; these read GVTK…TDAD and VRRD…DQNT. 2 stretches are compositionally biased toward basic and acidic residues: residues 40-60 and 122-178; these read ETDK…TDAD and ELQR…EAAK. The span at 182–223 shows a compositional bias: low complexity; it reads AAAAEAAAREQQTQASKPAQAAQPAAAKAEPVAAKAAEPVVA. Over residues 231–280 the composition is skewed to basic and acidic residues; the sequence is ERAAAERAAQREAAKKAEDAARQAAEKARAEQEEIAKRRAAAEAEARAIR. The span at 318–345 shows a compositional bias: low complexity; that stretch reads RPAGEAPARPAAKKPAAAAPAATTTPSA. Gly residues predominate over residues 374 to 387; it reads TSGGVDRGWRGGPK. The tr-type G domain occupies 489 to 658; it reads PRPPVVTVMG…LLQAEVLELK (170 aa). Positions 498–505 are G1; the sequence is GHVDHGKT. 498-505 contributes to the GTP binding site; sequence GHVDHGKT. Positions 523 to 527 are G2; sequence GITQH. The interval 544 to 547 is G3; that stretch reads DTPG. Residues 544–548 and 598–601 each bind GTP; these read DTPGH and NKID. The segment at 598–601 is G4; the sequence is NKID. A G5 region spans residues 634–636; the sequence is SAK.

Belongs to the TRAFAC class translation factor GTPase superfamily. Classic translation factor GTPase family. IF-2 subfamily.

It localises to the cytoplasm. Its function is as follows. One of the essential components for the initiation of protein synthesis. Protects formylmethionyl-tRNA from spontaneous hydrolysis and promotes its binding to the 30S ribosomal subunits. Also involved in the hydrolysis of GTP during the formation of the 70S ribosomal complex. The sequence is that of Translation initiation factor IF-2 from Paraburkholderia xenovorans (strain LB400).